The following is a 106-amino-acid chain: Cell cycle protein GpsB (106 aa).

The stretch at 34–67 (LDVIIQDYDNFKQEIDRLKAENEKLKKSTPAVEQ) forms a coiled coil. The disordered stretch occupies residues 55 to 83 (NEKLKKSTPAVEQSRSRSQQPPTSQVNYD). A compositionally biased stretch (low complexity) spans 70 to 79 (SRSQQPPTSQ).

The protein belongs to the GpsB family. Forms polymers through the coiled coil domains. Interacts with PBP1, MreC and EzrA.

It is found in the cytoplasm. Divisome component that associates with the complex late in its assembly, after the Z-ring is formed, and is dependent on DivIC and PBP2B for its recruitment to the divisome. Together with EzrA, is a key component of the system that regulates PBP1 localization during cell cycle progression. Its main role could be the removal of PBP1 from the cell pole after pole maturation is completed. Also contributes to the recruitment of PBP1 to the division complex. Not essential for septum formation. The protein is Cell cycle protein GpsB of Oceanobacillus iheyensis (strain DSM 14371 / CIP 107618 / JCM 11309 / KCTC 3954 / HTE831).